A 1990-amino-acid polypeptide reads, in one-letter code: Protein TANC2 (1990 aa).

Disordered regions lie at residues 1-85 (MFRN…SVDE) and 129-149 (SPCSTLTSSTASPPASSPCST). Phosphoserine occurs at positions 169, 238, 294, and 400. Residues 396–442 (IASDSPHASPKHVDANRELPLTQPPSAHSSITSGSCPGTPEMRRRQE) form a disordered region. Over residues 419-431 (PPSAHSSITSGSC) the composition is skewed to polar residues. ANK repeat units follow at residues 846–878 (EGLSMALASLRNLYTPNIKVSRLLILGGANINY), 884–913 (NNAPILCVQSHLGYTEMVALLLEFGANVDA), 917–946 (SGLTPLGYAAAAGYLSIVVLLCKKRAKVDH), 950–979 (NGQCALVHAALRGHLEVVKFLIQCDWTMAG), 990–1019 (AIQQALIAAASMGYTEIVSYLLDLPEKDEE), 1033–1062 (WGETALTAAAGRGKLEVCRLLLEQGAAVAQ), 1066–1095 (RGAVPLFSTVRQGHWQIVDLLLTHGADVNM), 1099–1128 (QGRTPLMMAASEGHLGTVDFLLAQGASIAL), 1132–1161 (EGLTALSWACLKGHLSVVRSLVDNGAATDH), 1165–1194 (NGRTPLDLAAFYGDAEVVQFLVDHGAMIEH), and 1198–1227 (SGMRPLDRAVGCRNTSVVVTLLKKGAKIGP). TPR repeat units lie at residues 1244-1277 (LSKLMEEGDMFYKKGKVKEAAQRYQYALKKFPRE), 1291-1324 (VSLLLNLSRCRRKMNDFGMAEEFATKALELKPKS), and 1325-1358 (YEAYYARARAKRSSRQFAAALEDLNEAIKLCPNN). Disordered stretches follow at residues 1372 to 1401 (CRQMQQPQQPPPPPQPQQQLPEEAEPEPQH), 1430 to 1586 (EARP…KMAQ), and 1692 to 1718 (LTKEDLPQRPSSAYRGGVRYSQTPQIG). S1442 and S1458 each carry phosphoserine. Polar residues predominate over residues 1469-1498 (RSSSSVGSPTRQTYQSTSPALSPTHQNSHY). Phosphoserine occurs at positions 1530 and 1545. The span at 1553–1572 (VYRSQSGSPVRYQQETSVSQ) shows a compositional bias: polar residues. Residues R1563 and R1576 each carry the asymmetric dimethylarginine modification. S1579 is subject to Phosphoserine. S1722 carries the post-translational modification Phosphoserine. Low complexity predominate over residues 1783–1798 (SPSSNSISSTSNLTPT). Disordered regions lie at residues 1783-1803 (SPSSNSISSTSNLTPTFRPSS) and 1821-1843 (DELSPVSPTQGGYPSEPTRSRTT). Phosphoserine is present on residues S1824 and S1827. The N-linked (GlcNAc...) asparagine glycan is linked to N1928. Residues 1968–1990 (SRDSRQGQTSPIKPKRPFVESNV) are disordered.

This sequence belongs to the TANC family. As to quaternary structure, interacts with KIF1A; the interaction decreases in presence of calcium.

It localises to the cell projection. Its subcellular location is the dendritic spine. Functionally, scaffolding protein in the dendritic spines which acts as immobile postsynaptic posts able to recruit KIF1A-driven dense core vesicles to dendritic spines. This Homo sapiens (Human) protein is Protein TANC2 (TANC2).